A 69-amino-acid chain; its full sequence is Cytochrome c oxidase subunit 8A, mitochondrial (69 aa).

Residues 1–25 (MSVLTPLLLRGLTGSARRLPVPRAK) constitute a mitochondrion transit peptide. The SIFI-degron signature appears at 2-19 (SVLTPLLLRGLTGSARRL). The Mitochondrial matrix portion of the chain corresponds to 26–36 (IHSLPPEGKLG). A helical membrane pass occupies residues 37-60 (IMELAVGLTSCFVTFLLPAGWILS). Residues 61–69 (HLETYRRPE) are Mitochondrial intermembrane-facing.

Belongs to the cytochrome c oxidase VIII family. Component of the cytochrome c oxidase (complex IV, CIV), a multisubunit enzyme composed of 14 subunits. The complex is composed of a catalytic core of 3 subunits MT-CO1, MT-CO2 and MT-CO3, encoded in the mitochondrial DNA, and 11 supernumerary subunits COX4I1 (or COX4I2), COX5A, COX5B, COX6A1 (or COX6A2), COX6B1 (or COX6B2), COX6C, COX7A2 (or COX7A1), COX7B, COX7C, COX8A and NDUFA4, which are encoded in the nuclear genome. The complex exists as a monomer or a dimer and forms supercomplexes (SCs) in the inner mitochondrial membrane with NADH-ubiquinone oxidoreductase (complex I, CI) and ubiquinol-cytochrome c oxidoreductase (cytochrome b-c1 complex, complex III, CIII), resulting in different assemblies (supercomplex SCI(1)III(2)IV(1) and megacomplex MCI(2)III(2)IV(2)). In response to mitochondrial stress, the precursor protein is ubiquitinated by the SIFI complex in the cytoplasm before mitochondrial import, leading to its degradation. Within the SIFI complex, UBR4 initiates ubiquitin chain that are further elongated or branched by KCMF1. Widely expressed.

It localises to the mitochondrion inner membrane. The protein operates within energy metabolism; oxidative phosphorylation. Functionally, component of the cytochrome c oxidase, the last enzyme in the mitochondrial electron transport chain which drives oxidative phosphorylation. The respiratory chain contains 3 multisubunit complexes succinate dehydrogenase (complex II, CII), ubiquinol-cytochrome c oxidoreductase (cytochrome b-c1 complex, complex III, CIII) and cytochrome c oxidase (complex IV, CIV), that cooperate to transfer electrons derived from NADH and succinate to molecular oxygen, creating an electrochemical gradient over the inner membrane that drives transmembrane transport and the ATP synthase. Cytochrome c oxidase is the component of the respiratory chain that catalyzes the reduction of oxygen to water. Electrons originating from reduced cytochrome c in the intermembrane space (IMS) are transferred via the dinuclear copper A center (CU(A)) of subunit 2 and heme A of subunit 1 to the active site in subunit 1, a binuclear center (BNC) formed by heme A3 and copper B (CU(B)). The BNC reduces molecular oxygen to 2 water molecules using 4 electrons from cytochrome c in the IMS and 4 protons from the mitochondrial matrix. The sequence is that of Cytochrome c oxidase subunit 8A, mitochondrial (COX8A) from Homo sapiens (Human).